Consider the following 166-residue polypeptide: uncharacterized protein (166 aa).

Over residues 73–88 (SKLNNNNNSNNNNKMA) the composition is skewed to low complexity. Disordered stretches follow at residues 73–101 (SKLNNNNNSNNNNKMAVDNKDNKDNEKDK) and 126–166 (PQSS…EFNN). Residues 89–101 (VDNKDNKDNEKDK) show a composition bias toward basic and acidic residues. The span at 134–154 (SPTHKSPSSSPKTISPVKVSP) shows a compositional bias: low complexity. Residues 155 to 166 (TSSPIKNPEFNN) are compositionally biased toward polar residues.

This is an uncharacterized protein from Dictyostelium discoideum (Social amoeba).